The chain runs to 115 residues: U3-lycotoxin-Ls1k (115 aa).

The signal sequence occupies residues 1 to 20 (MKFVLLFGVLLVTLFSYSSA). A propeptide spanning residues 21 to 44 (EMLDDFDQADEDELLSLIEKEEAR) is cleaved from the precursor. Disulfide bonds link Cys-48–Cys-63, Cys-55–Cys-72, Cys-62–Cys-87, and Cys-74–Cys-85.

The protein belongs to the neurotoxin 19 (CSTX) family. 01 subfamily. In terms of tissue distribution, expressed by the venom gland.

Its subcellular location is the secreted. The polypeptide is U3-lycotoxin-Ls1k (Lycosa singoriensis (Wolf spider)).